The following is a 218-amino-acid chain: UPF0319 protein PM0395 (218 aa).

The signal sequence occupies residues 1-21 (MKFRFAALASVALLTSTVSVA).

It belongs to the UPF0319 family.

This chain is UPF0319 protein PM0395, found in Pasteurella multocida (strain Pm70).